We begin with the raw amino-acid sequence, 126 residues long: Fluoride-specific ion channel FluC (126 aa).

The next 4 helical transmembrane spans lie at 7-24, 35-55, 69-89, and 98-118; these read LWVS…YFLS, FPWG…LFLV, LLIA…AYES, and WGLF…AVLG. Na(+) contacts are provided by G77 and T80.

The protein belongs to the fluoride channel Fluc/FEX (TC 1.A.43) family.

It localises to the cell inner membrane. It catalyses the reaction fluoride(in) = fluoride(out). Its activity is regulated as follows. Na(+) is not transported, but it plays an essential structural role and its presence is essential for fluoride channel function. Functionally, fluoride-specific ion channel. Important for reducing fluoride concentration in the cell, thus reducing its toxicity. The sequence is that of Fluoride-specific ion channel FluC from Koribacter versatilis (strain Ellin345).